The following is a 420-amino-acid chain: Serine hydroxymethyltransferase (420 aa).

(6S)-5,6,7,8-tetrahydrofolate is bound by residues Leu121 and 125–127 (GHL). An N6-(pyridoxal phosphate)lysine modification is found at Lys229.

This sequence belongs to the SHMT family. In terms of assembly, homodimer. The cofactor is pyridoxal 5'-phosphate.

Its subcellular location is the cytoplasm. The enzyme catalyses (6R)-5,10-methylene-5,6,7,8-tetrahydrofolate + glycine + H2O = (6S)-5,6,7,8-tetrahydrofolate + L-serine. It participates in one-carbon metabolism; tetrahydrofolate interconversion. The protein operates within amino-acid biosynthesis; glycine biosynthesis; glycine from L-serine: step 1/1. Functionally, catalyzes the reversible interconversion of serine and glycine with tetrahydrofolate (THF) serving as the one-carbon carrier. This reaction serves as the major source of one-carbon groups required for the biosynthesis of purines, thymidylate, methionine, and other important biomolecules. Also exhibits THF-independent aldolase activity toward beta-hydroxyamino acids, producing glycine and aldehydes, via a retro-aldol mechanism. This Wigglesworthia glossinidia brevipalpis protein is Serine hydroxymethyltransferase.